The following is a 159-amino-acid chain: Vasotocin-neurophysin VT (159 aa).

The N-terminal stretch at 1–17 (TAPVPACFLCLLALSSA) is a signal peptide. Cys18 and Cys23 are joined by a disulfide. Gly26 bears the Glycine amide mark. 7 disulfide bridges follow: Cys39–Cys83, Cys42–Cys56, Cys50–Cys73, Cys57–Cys63, Cys90–Cys102, Cys96–Cys114, and Cys103–Cys108. Asn129 is a glycosylation site (N-linked (GlcNAc...) asparagine).

The protein belongs to the vasopressin/oxytocin family. In terms of processing, seven disulfide bonds are present in neurophysin.

The protein localises to the secreted. Functionally, vasotocin is an antidiuretic hormone. This Bufo japonicus (Japanese common toad) protein is Vasotocin-neurophysin VT.